The chain runs to 1165 residues: Activity-dependent neuroprotector homeobox protein 2 (1165 aa).

Residues 73 to 96 form a C2H2-type 1 zinc finger; the sequence is YCCSLCRYSTKVLTSLKNHLHRYH. A C2H2-type 2; degenerate zinc finger spans residues 106 to 128; the sequence is IPCPNCPFSSQPRVVGKHFRMFH. Lys146 is covalently cross-linked (Glycyl lysine isopeptide (Lys-Gly) (interchain with G-Cter in SUMO2)). A C2H2-type 3; degenerate zinc finger spans residues 155–178; that stretch reads FTCLKCNFSNTLYYSMKKHVLVAH. The C2H2-type 4 zinc-finger motif lies at 215-240; it reads YYCKKCSAIASSQDALMYHILTSDAH. Over residues 303–318 the composition is skewed to low complexity; sequence SGTVQSVTVTPGTSGS. Positions 303 to 327 are disordered; sequence SGTVQSVTVTPGTSGSLTHSPPTTA. Residues 696-718 form a C2H2-type 5; degenerate zinc finger; sequence KTCPVCNELFPSNVYQVHMEVAH. The segment at 724–746 adopts a C2H2-type 6; degenerate zinc-finger fold; the sequence is QLCQVCNELFPANVYQVHMEVAH. Residues 777–798 form a C2H2-type 7; degenerate zinc finger; that stretch reads VRCLSCKCLVSQEELMHHLLMH. C2H2-type zinc fingers lie at residues 800-823 and 905-935; these read LGCL…RTKH and LTCP…PTVH. A disordered region spans residues 1005-1068; that stretch reads PVKRKLPEGH…SGPSEDSLQA (64 aa). Residues Lys1009 and Lys1048 each participate in a glycyl lysine isopeptide (Lys-Gly) (interchain with G-Cter in SUMO2) cross-link. Positions 1009–1024 are enriched in basic and acidic residues; the sequence is KLPEGHLGPEDQRDGE. Positions 1090–1132 form a DNA-binding region, homeobox; it reads DYFHRRPYPSRKEVELLSSLLWVWKIDVASFFGKRRYICMKAI.

It belongs to the krueppel C2H2-type zinc-finger protein family. In terms of assembly, may interact with SMARCA4/BRG1. In terms of tissue distribution, expressed widely, with the highest level in the brain.

The protein localises to the nucleus. In terms of biological role, may be involved in transcriptional regulation. May play a role in neuronal function; perhaps involved in protection of brain tissues from oxidative stress. May be involved in erythroid differentiation. This is Activity-dependent neuroprotector homeobox protein 2 (Adnp2) from Mus musculus (Mouse).